Consider the following 506-residue polypeptide: Maturase K (506 aa).

Belongs to the intron maturase 2 family. MatK subfamily.

Its subcellular location is the plastid. It is found in the chloroplast. In terms of biological role, usually encoded in the trnK tRNA gene intron. Probably assists in splicing its own and other chloroplast group II introns. The sequence is that of Maturase K from Prunus persica (Peach).